Here is a 578-residue protein sequence, read N- to C-terminus: NADPH oxidase 4 (578 aa).

Residues 1 to 16 lie on the Cytoplasmic side of the membrane; that stretch reads MAVSWRSWLANEGVKH. Residues 17–37 form a helical membrane-spanning segment; sequence LCLLIWLSLNVLLFWKTFLLY. Over 38 to 62 the chain is Extracellular; that stretch reads NQGPEYYYIHQMLGLGLCLSRASAS. The Ferric oxidoreductase domain maps to 58–303; sequence RASASVLNLN…YCAERLYRCI (246 aa). The helical transmembrane segment at 63-83 threads the bilayer; it reads VLNLNCSLILLPMCRTVLAYL. Topologically, residues 84–104 are cytoplasmic; it reads RGSQKVPSRRTRRLLDKSKTL. The helical transmembrane segment at 105–125 threads the bilayer; it reads HITCGVTICIFSGVHVAAHLV. Residues 126–154 lie on the Extracellular side of the membrane; that stretch reads NALNFSVNYSEDFLELNAARYQNEDPRKL. Asn-133 carries N-linked (GlcNAc...) asparagine glycosylation. The chain crosses the membrane as a helical span at residues 155 to 175; it reads LFTTIPGLTGVCMVVVLFLMV. The Cytoplasmic portion of the chain corresponds to 176–188; the sequence is TASTYAIRVSNYD. A helical membrane pass occupies residues 189–209; it reads IFWYTHNLFFVFYMLLLLHVS. Residues 210–424 are Extracellular-facing; the sequence is GGLLKYQTNV…SPFEESLNYE (215 aa). An E-loop; essential for H2O2 generating catalytic activity region spans residues 218 to 273; sequence NVDTHPPGCISLNQTSSQNMSIPDYVSEHFHGSLPRGFSKLEDRYQKTLVKICLEE. Asn-230 carries an N-linked (GlcNAc...) asparagine glycan. Residues 248–575 are mediates interaction with TLR4; it reads HGSLPRGFSK…YGTKFEYNKE (328 aa). Positions 304 to 419 constitute an FAD-binding FR-type domain; that stretch reads RSNKPVTIIS…DGPFGSPFEE (116 aa). A helical membrane pass occupies residues 425–445; sequence VSLCVAGGIGVTPFASILNTL. At 446-578 the chain is on the cytoplasmic side; it reads LDDWKPYKLR…KFEYNKESFS (133 aa).

Interacts with, relocalizes and stabilizes CYBA/p22phox. Interacts with TLR4. Interacts with protein disulfide isomerase. Interacts with PPP1R15A. Interacts with LRRC8A; this interaction prevents the ubiquitin-mediated degradation of LRRC8A. Requires heme as cofactor. In terms of processing, N-glycosylation is required for the function. EXpressed in brain, in all layers of the cerebellum, in pyramidal cells of the Ammon horn and in Purkinje cells (at protein level). Expressed in osteoclasts, leukocytes, kidney, liver and lung.

The protein resides in the cytoplasm. It is found in the endoplasmic reticulum membrane. The protein localises to the cell membrane. Its subcellular location is the cell junction. It localises to the focal adhesion. The protein resides in the nucleus. It carries out the reaction NADPH + 2 O2 = 2 superoxide + NADP(+) + H(+). The enzyme catalyses NADPH + O2 + H(+) = H2O2 + NADP(+). Its activity is regulated as follows. Activated by insulin. Inhibited by diphenylene iodonium. Inhibited by plumbagin. Activated by phorbol 12-myristate 13-acetate (PMA). NADPH oxidase that catalyzes predominantly the reduction of oxygen to H2O2. Can also catalyze to a smaller extent, the reduction of oxygen to superoxide. May function as an oxygen sensor regulating the KCNK3/TASK-1 potassium channel and HIF1A activity. May regulate insulin signaling cascade. May play a role in apoptosis, bone resorption and lipolysaccharide-mediated activation of NFKB. May produce superoxide in the nucleus and play a role in regulating gene expression upon cell stimulation. Promotes ferroptosis, reactive oxygen species production and reduced glutathione (GSH) levels by activating NLRP3 inflammasome activation and cytokine release. This chain is NADPH oxidase 4 (Nox4), found in Mus musculus (Mouse).